We begin with the raw amino-acid sequence, 302 residues long: ATP synthase gamma chain (302 aa).

The protein belongs to the ATPase gamma chain family. As to quaternary structure, F-type ATPases have 2 components, CF(1) - the catalytic core - and CF(0) - the membrane proton channel. CF(1) has five subunits: alpha(3), beta(3), gamma(1), delta(1), epsilon(1). CF(0) has three main subunits: a, b and c.

The protein resides in the cell membrane. Functionally, produces ATP from ADP in the presence of a proton gradient across the membrane. The gamma chain is believed to be important in regulating ATPase activity and the flow of protons through the CF(0) complex. In Enterococcus faecalis (strain ATCC 700802 / V583), this protein is ATP synthase gamma chain.